The chain runs to 250 residues: U6 snRNA phosphodiesterase 1 (250 aa).

Residues 1-31 (MALVSYSSSEEDEGETSEPPGRRLPPLPPPT) are disordered. Positions 22–31 (RRLPPLPPPT) are enriched in pro residues. H105 functions as the Proton acceptor in the catalytic mechanism. 105 to 107 (HIS) lines the AMP pocket. UMP-binding positions include Q149, Y187, and 191–195 (SFHVS). AMP contacts are provided by residues Y187 and 189-195 (EPSFHVS). Residue H193 is the Proton donor of the active site.

The protein belongs to the 2H phosphoesterase superfamily. USB1 family.

Its subcellular location is the nucleus. The enzyme catalyses a 3'-end uridylyl-uridine-RNA = a 3'-end 2',3'-cyclophospho-uridine-RNA + uridine. It catalyses the reaction a 3'-end uridylyl-adenosine-RNA = a 3'-end 2',3'-cyclophospho-uridine-RNA + adenosine. In terms of biological role, 3'-5' RNA exonuclease that trims the 3' end of oligo(U) and oligo(A) tracts of the pre-U6 small nuclear RNA (snRNA) molecule, leading to the formation of a mature U6 snRNA 3' end-terminated with a 2',3'-cyclic phosphate. Participates in the U6 snRNA 3' end processing that prevents U6 snRNA degradation. In addition also removes uridines from the 3' end of U6atac snRNA and possibly the vault RNA VTRNA1-1. This Xenopus laevis (African clawed frog) protein is U6 snRNA phosphodiesterase 1.